A 505-amino-acid chain; its full sequence is Histidine--tRNA ligase, mitochondrial (505 aa).

The transit peptide at 1 to 31 directs the protein to the mitochondrion; it reads MPHLGPLRRRAWAALLGQLLRPPSTVCTRGC. Phosphoserine is present on S66. L-histidine contacts are provided by residues 130-132, R157, Q173, D177, R326, and 330-331; these read DLT and YY. K443 carries the N6-acetyllysine modification.

This sequence belongs to the class-II aminoacyl-tRNA synthetase family. As to quaternary structure, homodimer.

Its subcellular location is the mitochondrion. The enzyme catalyses tRNA(His) + L-histidine + ATP = L-histidyl-tRNA(His) + AMP + diphosphate + H(+). In terms of biological role, mitochondrial aminoacyl-tRNA synthetase that catalyzes the ATP-dependent ligation of histidine to the 3'-end of its cognate tRNA, via the formation of an aminoacyl-adenylate intermediate (His-AMP). In Mus musculus (Mouse), this protein is Histidine--tRNA ligase, mitochondrial (Hars2).